The chain runs to 591 residues: Lipoprotein LpqB (591 aa).

The N-terminal stretch at 1–20 (MTLRPSRRAVLSAAAVLLTG) is a signal peptide. The N-palmitoyl cysteine moiety is linked to residue cysteine 21. A lipid anchor (S-diacylglycerol cysteine) is attached at cysteine 21.

This sequence belongs to the LpqB lipoprotein family.

It localises to the cell membrane. This is Lipoprotein LpqB from Cutibacterium acnes (strain DSM 16379 / KPA171202) (Propionibacterium acnes).